We begin with the raw amino-acid sequence, 190 residues long: Potassium-transporting ATPase KdpC subunit (190 aa).

Residues 7 to 27 (PALLMLLVWTLITGVFYPVLV) form a helical membrane-spanning segment.

This sequence belongs to the KdpC family. As to quaternary structure, the system is composed of three essential subunits: KdpA, KdpB and KdpC.

Its subcellular location is the cell inner membrane. Its function is as follows. Part of the high-affinity ATP-driven potassium transport (or Kdp) system, which catalyzes the hydrolysis of ATP coupled with the electrogenic transport of potassium into the cytoplasm. This subunit acts as a catalytic chaperone that increases the ATP-binding affinity of the ATP-hydrolyzing subunit KdpB by the formation of a transient KdpB/KdpC/ATP ternary complex. The protein is Potassium-transporting ATPase KdpC subunit of Methylococcus capsulatus (strain ATCC 33009 / NCIMB 11132 / Bath).